The sequence spans 721 residues: Mitogen-activated protein kinase 6 (721 aa).

A Protein kinase domain is found at 20-316 (YMDLKPLGCG…AEEALSHPYM (297 aa)). ATP is bound by residues 26–34 (LGCGGNGLV) and Lys-49. Residue Asp-152 is the Proton acceptor of the active site. Thr-626 bears the Phosphothreonine mark. A TXY motif is present at residues 626–628 (TSY). Tyr-628 carries the phosphotyrosine modification.

It belongs to the protein kinase superfamily. CMGC Ser/Thr protein kinase family. MAP kinase subfamily. Mg(2+) serves as cofactor. Dually phosphorylated on Thr-626 and Tyr-628, which activates the enzyme.

The catalysed reaction is L-seryl-[protein] + ATP = O-phospho-L-seryl-[protein] + ADP + H(+). The enzyme catalyses L-threonyl-[protein] + ATP = O-phospho-L-threonyl-[protein] + ADP + H(+). With respect to regulation, activated by threonine and tyrosine phosphorylation. Functionally, phosphorylates microtubule-associated protein 2 (MAP2). May promote entry in the cell cycle. This is Mitogen-activated protein kinase 6 (MAPK6) from Gallus gallus (Chicken).